The primary structure comprises 852 residues: Vacuolar protein sorting-associated protein 16 homolog (852 aa).

Belongs to the VPS16 family. Probable core component of at least two putative endosomal tethering complexes, the homotypic fusion and vacuole protein sorting (HOPS) complex and the class C core vacuole/endosome tethering (CORVET) complex. Their common core is composed of the class C Vps proteins vps-11, vps-16 and vps-18, which in HOPS further associates with vps-33.1, vps-39 and vps-41 and in CORVET with vps-8 and vps-33.2.

The protein resides in the late endosome membrane. Its subcellular location is the lysosome membrane. Its function is as follows. Plays a role in vesicle-mediated protein trafficking to lysosomal compartments including the endocytic membrane transport pathways. Believed to act as a core component of the putative HOPS and CORVET endosomal tethering complexes which are proposed to be involved in the rab-5-to-rab-7 endosome conversion probably implicating sand-1, and via binding SNAREs and SNARE complexes to mediate tethering and docking events during SNARE-mediated membrane fusion. The HOPS complex is proposed to be recruited to rab-7 on the late endosomal membrane and to regulate late endocytic, phagocytic and autophagic traffic towards lysosomes. Within the HOPS complex, contributes to the normal development of gut granules in the adult intestine. The CORVET complex is proposed to function as a rab-5 effector to mediate early endosome fusion probably in specific endosome subpopulations. Required for recruitment of vps-33.1 to the HOPS complex. Required for fusion of endosomes and autophagosomes with lysosomes; the function is dependent on its association with vps-33.1 but not vps-33.2. The polypeptide is Vacuolar protein sorting-associated protein 16 homolog (Caenorhabditis elegans).